A 391-amino-acid polypeptide reads, in one-letter code: Winged helix repair factor 1 (391 aa).

2 stretches are compositionally biased toward low complexity: residues 1 to 24 (MNIK…PSPI) and 49 to 63 (LSFN…SNIN). The interval 1-95 (MNIKRNQNNS…SITTTTATST (95 aa)) is disordered. Residues 64–74 (GEEDNDDDDRE) show a composition bias toward acidic residues. Positions 82–95 (NPNPSITTTTATST) are enriched in low complexity.

It belongs to the STK19 family.

The protein resides in the nucleus. Its function is as follows. DNA-binding protein which is required for efficient transcription-coupled nucleotide excision repair. The polypeptide is Winged helix repair factor 1 (Dictyostelium discoideum (Social amoeba)).